We begin with the raw amino-acid sequence, 235 residues long: Transmembrane emp24 domain-containing protein 9 (235 aa).

The N-terminal stretch at 1–37 (MAAVRGVRVVGTSPGLLLGRGMRAFLLLLCLAARGGA) is a signal peptide. Over 38 to 202 (LYFHIGETEK…RQTSESTNQR (165 aa)) the chain is Lumenal. Residues 47–145 (KKCFIEEIPD…MLRVHLDIQV (99 aa)) form the GOLD domain. The required for interaction with STX17 stretch occupies residues 121-160 (CLHSNSTKFSLFAGGMLRVHLDIQVGEHANDYAEIAAKDK). The N-linked (GlcNAc...) asparagine glycan is linked to asparagine 125. Residues 154-184 (EIAAKDKLSELQLRVRQLVEQVEQIQKEQNY) adopt a coiled-coil conformation. Lysine 160 bears the N6-acetyllysine mark. A helical transmembrane segment spans residues 203 to 222 (VLWWSILQTLILVAIGVWQM). Topologically, residues 223–235 (RHLKSFFEAKKLV) are cytoplasmic. The COPII vesicle coat-binding motif lies at 228–229 (FF). The short motif at 228–235 (FFEAKKLV) is the COPI vesicle coat-binding element.

This sequence belongs to the EMP24/GP25L family. In terms of assembly, monomer and homodimer in endoplasmic reticulum. Predominantly monomeric and to lesser extent homodimeric in endoplasmic reticulum-Golgi intermediate compartment and cis-Golgi network. Probably oligomerizes with other members of the EMP24/GP25L family such as TMED2, TMED7 and TMED10. Interacts with TMED5. Interacts (via C-terminus) with COPG1; the interaction involves dimeric TMED9. Interacts with PTPN2 and SPAST. Interacts with STX17; the interaction is direct. In terms of processing, N-linked glycosylated containing high mannose.

The protein resides in the endoplasmic reticulum membrane. The protein localises to the golgi apparatus. It is found in the cis-Golgi network membrane. It localises to the endoplasmic reticulum-Golgi intermediate compartment membrane. Its subcellular location is the trans-Golgi network membrane. Its function is as follows. Appears to be involved in vesicular protein trafficking, mainly in the early secretory pathway. In COPI vesicle-mediated retrograde transport involved in the coatomer recruitment to membranes of the early secretory pathway. Increases coatomer-dependent activity of ARFGAP2. Thought to play a crucial role in the specific retention of p24 complexes in cis-Golgi membranes; specifically contributes to the coupled localization of TMED2 and TMED10 in the cis-Golgi network. May be involved in organization of intracellular membranes, such as of the ER-Golgi intermediate compartment and the Golgi apparatus. Involved in ER localization of PTPN2. This chain is Transmembrane emp24 domain-containing protein 9 (Tmed9), found in Rattus norvegicus (Rat).